A 227-amino-acid chain; its full sequence is 2,3-bisphosphoglycerate-dependent phosphoglycerate mutase (227 aa).

Substrate is bound by residues 7-14 (RHGFSEWN), 20-21 (TG), Arg59, 86-89 (ERHY), Lys97, 113-114 (RR), and 182-183 (GN). His8 acts as the Tele-phosphohistidine intermediate in catalysis. Glu86 acts as the Proton donor/acceptor in catalysis.

Belongs to the phosphoglycerate mutase family. BPG-dependent PGAM subfamily. In terms of assembly, homodimer.

It catalyses the reaction (2R)-2-phosphoglycerate = (2R)-3-phosphoglycerate. It functions in the pathway carbohydrate degradation; glycolysis; pyruvate from D-glyceraldehyde 3-phosphate: step 3/5. Functionally, catalyzes the interconversion of 2-phosphoglycerate and 3-phosphoglycerate. This chain is 2,3-bisphosphoglycerate-dependent phosphoglycerate mutase, found in Glaesserella parasuis serovar 5 (strain SH0165) (Haemophilus parasuis).